The chain runs to 313 residues: Formimidoylglutamase (313 aa).

The Mn(2+) site is built by histidine 130, aspartate 155, histidine 157, aspartate 159, aspartate 241, and aspartate 243.

This sequence belongs to the arginase family. The cofactor is Mn(2+).

It catalyses the reaction N-formimidoyl-L-glutamate + H2O = formamide + L-glutamate. The protein operates within amino-acid degradation; L-histidine degradation into L-glutamate; L-glutamate from N-formimidoyl-L-glutamate (hydrolase route): step 1/1. Functionally, catalyzes the conversion of N-formimidoyl-L-glutamate to L-glutamate and formamide. This Salmonella enteritidis PT4 (strain P125109) protein is Formimidoylglutamase.